A 298-amino-acid polypeptide reads, in one-letter code: N-acetylmuramic acid 6-phosphate etherase (298 aa).

Positions isoleucine 55–lysine 218 constitute an SIS domain. The Proton donor role is filled by glutamate 83. The active site involves glutamate 114.

The protein belongs to the GCKR-like family. MurNAc-6-P etherase subfamily. Homodimer.

It carries out the reaction N-acetyl-D-muramate 6-phosphate + H2O = N-acetyl-D-glucosamine 6-phosphate + (R)-lactate. It participates in amino-sugar metabolism; 1,6-anhydro-N-acetylmuramate degradation. It functions in the pathway amino-sugar metabolism; N-acetylmuramate degradation. The protein operates within cell wall biogenesis; peptidoglycan recycling. Its function is as follows. Specifically catalyzes the cleavage of the D-lactyl ether substituent of MurNAc 6-phosphate, producing GlcNAc 6-phosphate and D-lactate. Together with AnmK, is also required for the utilization of anhydro-N-acetylmuramic acid (anhMurNAc) either imported from the medium or derived from its own cell wall murein, and thus plays a role in cell wall recycling. The sequence is that of N-acetylmuramic acid 6-phosphate etherase from Escherichia coli O1:K1 / APEC.